The sequence spans 352 residues: Phenylalanine--tRNA ligase alpha subunit (352 aa).

A Mg(2+)-binding site is contributed by E258.

The protein belongs to the class-II aminoacyl-tRNA synthetase family. Phe-tRNA synthetase alpha subunit type 1 subfamily. In terms of assembly, tetramer of two alpha and two beta subunits. It depends on Mg(2+) as a cofactor.

Its subcellular location is the cytoplasm. It catalyses the reaction tRNA(Phe) + L-phenylalanine + ATP = L-phenylalanyl-tRNA(Phe) + AMP + diphosphate + H(+). The protein is Phenylalanine--tRNA ligase alpha subunit of Staphylococcus haemolyticus (strain JCSC1435).